We begin with the raw amino-acid sequence, 345 residues long: 2-oxoglutarate and iron-dependent oxygenase domain-containing protein 2 (345 aa).

The region spanning 207 to 301 (DSHKAFVVKY…RWNLIIWMRA (95 aa)) is the Fe2OG dioxygenase domain. Residues His-227, Asp-229, and His-282 each coordinate Fe cation. Arg-292 contributes to the 2-oxoglutarate binding site.

It belongs to the OGFOD2 family. Fe(2+) serves as cofactor. It depends on L-ascorbate as a cofactor.

The chain is 2-oxoglutarate and iron-dependent oxygenase domain-containing protein 2 (ogfod2) from Danio rerio (Zebrafish).